The sequence spans 385 residues: 8-amino-7-oxononanoate synthase (385 aa).

A substrate-binding site is contributed by Arg21. 108–109 contributes to the pyridoxal 5'-phosphate binding site; that stretch reads GF. Residue His133 coordinates substrate. Residues Ser179, His207, and Thr233 each contribute to the pyridoxal 5'-phosphate site. Residue Lys236 is modified to N6-(pyridoxal phosphate)lysine. Thr352 contributes to the substrate binding site.

Belongs to the class-II pyridoxal-phosphate-dependent aminotransferase family. BioF subfamily. As to quaternary structure, homodimer. Pyridoxal 5'-phosphate serves as cofactor.

It carries out the reaction 6-carboxyhexanoyl-[ACP] + L-alanine + H(+) = (8S)-8-amino-7-oxononanoate + holo-[ACP] + CO2. The protein operates within cofactor biosynthesis; biotin biosynthesis. Its function is as follows. Catalyzes the decarboxylative condensation of pimeloyl-[acyl-carrier protein] and L-alanine to produce 8-amino-7-oxononanoate (AON), [acyl-carrier protein], and carbon dioxide. This Klebsiella pneumoniae (strain 342) protein is 8-amino-7-oxononanoate synthase.